Here is a 376-residue protein sequence, read N- to C-terminus: 23S rRNA (uracil(747)-C(5))-methyltransferase RlmC (376 aa).

[4Fe-4S] cluster contacts are provided by C3, C11, C14, and C87. S-adenosyl-L-methionine-binding residues include Q212, F241, E262, and N307. C334 functions as the Nucleophile in the catalytic mechanism.

It belongs to the class I-like SAM-binding methyltransferase superfamily. RNA M5U methyltransferase family. RlmC subfamily.

It catalyses the reaction uridine(747) in 23S rRNA + S-adenosyl-L-methionine = 5-methyluridine(747) in 23S rRNA + S-adenosyl-L-homocysteine + H(+). Functionally, catalyzes the formation of 5-methyl-uridine at position 747 (m5U747) in 23S rRNA. This chain is 23S rRNA (uracil(747)-C(5))-methyltransferase RlmC, found in Salmonella typhimurium (strain LT2 / SGSC1412 / ATCC 700720).